The following is a 506-amino-acid chain: Glutamate--tRNA ligase (506 aa).

The 'HIGH' region signature appears at 24–34; sequence PSPTGTPHVGL. The segment at 124–147 is disordered; the sequence is TPEEVEQRHRAKGEDPKRGYDNYD. Over residues 128–147 the composition is skewed to basic and acidic residues; that stretch reads VEQRHRAKGEDPKRGYDNYD. The 'KMSKS' region signature appears at 268–272; it reads KLSKR. Residue lysine 271 participates in ATP binding.

Belongs to the class-I aminoacyl-tRNA synthetase family. Glutamate--tRNA ligase type 1 subfamily. Monomer.

It localises to the cytoplasm. It carries out the reaction tRNA(Glu) + L-glutamate + ATP = L-glutamyl-tRNA(Glu) + AMP + diphosphate. Functionally, catalyzes the attachment of glutamate to tRNA(Glu) in a two-step reaction: glutamate is first activated by ATP to form Glu-AMP and then transferred to the acceptor end of tRNA(Glu). The sequence is that of Glutamate--tRNA ligase from Kocuria rhizophila (strain ATCC 9341 / DSM 348 / NBRC 103217 / DC2201).